Reading from the N-terminus, the 554-residue chain is Cytochrome c oxidase subunit 1-alpha (554 aa).

The helical transmembrane segment at 26–56 (KDIGVLYLFTAGLAGLISVTLTVYMRMELQH) threads the bilayer. A disulfide bond links Cys-63 and Cys-77. A run of 6 helical transmembrane segments spans residues 81-118 (AHLW…LHIG), 127-148 (LNNL…SLLS), 175-203 (AMDL…TFLN), 215-248 (PLFA…DRNF), 260-295 (DPVL…STFA), and 301-319 (GYLP…GFIV). Residue His-91 participates in Fe(II)-heme a binding. His-273 and Tyr-277 together coordinate Cu cation. Residues 273–277 (HPEVY) constitute a cross-link (1'-histidyl-3'-tyrosine (His-Tyr)). Cu cation contacts are provided by His-322 and His-323. 5 helical membrane passes run 331-359 (LTQQ…IATM), 367-390 (KTPM…VIAQ), 399-425 (DTYY…GTYY), 436-463 (PEWA…FLGR), and 478-508 (SYWN…TLFA). His-406 is a binding site for heme a3. A Fe(II)-heme a-binding site is contributed by His-408.

Belongs to the heme-copper respiratory oxidase family. It depends on Cu(2+) as a cofactor. Heme is required as a cofactor.

Its subcellular location is the cell inner membrane. The enzyme catalyses 4 Fe(II)-[cytochrome c] + O2 + 8 H(+)(in) = 4 Fe(III)-[cytochrome c] + 2 H2O + 4 H(+)(out). It participates in energy metabolism; oxidative phosphorylation. Functionally, subunit I and II form the functional core of the enzyme complex. Electrons originating in cytochrome c are transferred via heme a and Cu(A) to the binuclear center formed by heme a3 and Cu(B). This cytochrome c oxidase shows proton pump activity across the membrane in addition to the electron transfer. In Paracoccus denitrificans, this protein is Cytochrome c oxidase subunit 1-alpha (ctaDI).